Reading from the N-terminus, the 564-residue chain is Juvenile hormone esterase (564 aa).

Positions 1 to 19 (MTSHVLALAFLLHACTALA) are cleaved as a signal peptide. N81 is a glycosylation site (N-linked (GlcNAc...) asparagine). C89 and C109 are oxidised to a cystine. N180 is a glycosylation site (N-linked (GlcNAc...) asparagine). Catalysis depends on S220, which acts as the Acyl-ester intermediate. E351 serves as the catalytic Charge relay system. A glycan (N-linked (GlcNAc...) asparagine) is linked at N402. H465 acts as the Charge relay system in catalysis. The N-linked (GlcNAc...) asparagine glycan is linked to N515.

The protein belongs to the type-B carboxylesterase/lipase family.

It catalyses the reaction juvenile hormone I + H2O = juvenile hormone I carboxylate + methanol + H(+). The catalysed reaction is juvenile hormone III + H2O = juvenile hormone III carboxylate + methanol + H(+). In terms of biological role, JH esterase plays a crucial role in the decrease of JH activity in lepidopteran insects, by hydrolyzing the methyl ester of JH. It is also involved in the transport of JH. The protein is Juvenile hormone esterase of Heliothis virescens (Tobacco budworm moth).